Consider the following 394-residue polypeptide: [Pyruvate dehydrogenase (acetyl-transferring)] kinase 1, mitochondrial (394 aa).

A mitochondrion-targeting transit peptide spans 1–20 (MWKIMRSWKCGGMRWAHRQR). The region spanning 126–386 (AYPYELHNPP…DVYIKLKGPS (261 aa)) is the Histidine kinase domain. His148 is subject to Phosphohistidine; by autocatalysis. ATP is bound by residues 267 to 274 (EVFKNAFE), Asp304, 323 to 324 (ST), and 347 to 352 (GMGFGL).

The protein belongs to the PDK/BCKDK protein kinase family. As to quaternary structure, interacts with PKP2.

It localises to the mitochondrion matrix. The catalysed reaction is L-seryl-[pyruvate dehydrogenase E1 alpha subunit] + ATP = O-phospho-L-seryl-[pyruvate dehydrogenase E1 alpha subunit] + ADP + H(+). Functionally, inhibits the mitochondrial pyruvate dehydrogenase complex by phosphorylation of the E1 alpha subunit (PDA1), thus contributing to the regulation of glucose metabolism. Also involved in telomere maintenance. The polypeptide is [Pyruvate dehydrogenase (acetyl-transferring)] kinase 1, mitochondrial (Saccharomyces cerevisiae (strain ATCC 204508 / S288c) (Baker's yeast)).